Reading from the N-terminus, the 219-residue chain is Octanoyltransferase (219 aa).

One can recognise a BPL/LPL catalytic domain in the interval 32 to 207; the sequence is ENSQDEIWIV…TLSQELGLDK (176 aa). Substrate-binding positions include 71–78, 138–140, and 151–153; these read RGGQVTYH, SLG, and GLA. Cys169 functions as the Acyl-thioester intermediate in the catalytic mechanism.

It belongs to the LipB family.

The protein localises to the cytoplasm. The catalysed reaction is octanoyl-[ACP] + L-lysyl-[protein] = N(6)-octanoyl-L-lysyl-[protein] + holo-[ACP] + H(+). Its pathway is protein modification; protein lipoylation via endogenous pathway; protein N(6)-(lipoyl)lysine from octanoyl-[acyl-carrier-protein]: step 1/2. Catalyzes the transfer of endogenously produced octanoic acid from octanoyl-acyl-carrier-protein onto the lipoyl domains of lipoate-dependent enzymes. Lipoyl-ACP can also act as a substrate although octanoyl-ACP is likely to be the physiological substrate. The chain is Octanoyltransferase from Shewanella halifaxensis (strain HAW-EB4).